Here is a 284-residue protein sequence, read N- to C-terminus: Ubiquinone biosynthesis protein COQ4, mitochondrial (284 aa).

Zn(2+) is bound by residues His-165, Asp-166, His-169, and Glu-181.

This sequence belongs to the COQ4 family. In terms of assembly, component of a multi-subunit COQ enzyme complex, composed of at least COQ3, COQ4, COQ5, COQ6, COQ7 and COQ9. The cofactor is Zn(2+).

The protein resides in the mitochondrion inner membrane. The catalysed reaction is a 4-hydroxy-3-methoxy-5-(all-trans-polyprenyl)benzoate + H(+) = a 2-methoxy-6-(all-trans-polyprenyl)phenol + CO2. It functions in the pathway cofactor biosynthesis; ubiquinone biosynthesis. In terms of biological role, lyase that catalyzes the C1-decarboxylation of 4-hydroxy-3-methoxy-5-(all-trans-polyprenyl)benzoic acid into 2-methoxy-6-(all-trans-polyprenyl)phenol during ubiquinone biosynthesis. This Ajellomyces dermatitidis (strain ER-3 / ATCC MYA-2586) (Blastomyces dermatitidis) protein is Ubiquinone biosynthesis protein COQ4, mitochondrial.